Here is a 182-residue protein sequence, read N- to C-terminus: ATP synthase subunit delta, organellar chromatophore (182 aa).

It belongs to the ATPase delta chain family. In terms of assembly, F-type ATPases have 2 components, F(1) - the catalytic core - and F(0) - the membrane proton channel. F(1) has five subunits: alpha(3), beta(3), gamma(1), delta(1), epsilon(1). CF(0) has four main subunits: a(1), b(1), b'(1) and c(10-14). The alpha and beta chains form an alternating ring which encloses part of the gamma chain. F(1) is attached to F(0) by a central stalk formed by the gamma and epsilon chains, while a peripheral stalk is formed by the delta, b and b' chains.

The protein localises to the plastid. The protein resides in the organellar chromatophore thylakoid membrane. Functionally, f(1)F(0) ATP synthase produces ATP from ADP in the presence of a proton or sodium gradient. F-type ATPases consist of two structural domains, F(1) containing the extramembraneous catalytic core and F(0) containing the membrane proton channel, linked together by a central stalk and a peripheral stalk. During catalysis, ATP synthesis in the catalytic domain of F(1) is coupled via a rotary mechanism of the central stalk subunits to proton translocation. In terms of biological role, this protein is part of the stalk that links CF(0) to CF(1). It either transmits conformational changes from CF(0) to CF(1) or is implicated in proton conduction. In Paulinella chromatophora, this protein is ATP synthase subunit delta, organellar chromatophore.